A 469-amino-acid chain; its full sequence is Zinc transporter SLC39A7 (469 aa).

The chain crosses the membrane as a helical span at residues 5-25 (LGAPHWVAVGLLTWAALGLLV). 2 stretches are compositionally biased toward basic and acidic residues: residues 43–56 (HGHS…DFHH) and 66–114 (HTHE…EHSH). The disordered stretch occupies residues 43–122 (HGHSHRRSHE…SHGGYGESGA (80 aa)). A Pros-methylhistidine modification is found at H66. Transmembrane regions (helical) follow at residues 138 to 158 (ALGA…LIPV), 169 to 189 (LQIL…LHLI), and 214 to 234 (GPIL…LVVE). Residues 242 to 255 (GGHGHSHGHGHTHG) show a composition bias toward basic residues. Residues 242 to 313 (GGHGHSHGHG…QNSEEEKTGS (72 aa)) form a disordered region. A compositionally biased stretch (low complexity) spans 256 to 266 (HTQGSHGHGTQ). S275 and S276 each carry phosphoserine. Over residues 295–313 (RLKDGPLRPQNSEEEKTGS) the composition is skewed to basic and acidic residues. A run of 3 helical transmembrane segments spans residues 386–406 (LTAI…GGAV), 417–437 (GWVL…SVLP), and 448–468 (SLLE…IAHL).

The protein belongs to the ZIP transporter (TC 2.A.5) family. KE4/Catsup subfamily. Homodimer. Post-translationally, methylation at some His residue by METTL9 leads to reduced zinc-binding. In terms of processing, rapidly phosphorylated by CK2 following Zn(2+) treatment. This phosphorylation is required for efficient cytosolic Zn(2+) release.

The protein localises to the endoplasmic reticulum membrane. It is found in the golgi apparatus. It localises to the cis-Golgi network membrane. It carries out the reaction Zn(2+)(in) = Zn(2+)(out). Transports Zn(2+) from the endoplasmic reticulum (ER)/Golgi apparatus to the cytosol, playing an essential role in the regulation of cytosolic zinc levels. Acts as a gatekeeper of zinc release from intracellular stores, requiring post-translational activation by phosphorylation, resulting in activation of multiple downstream pathways leading to cell growth and proliferation. Has an essential role in B cell development and is required for proper B cell receptor signaling. Plays an important role in maintaining intestinal epithelial homeostasis and skin dermis development by regulating ER function. Controls cell signaling pathways involved in glucose metabolism in skeletal muscle. Has a protective role against ER stress in different biological contexts. Mediates Zn(2+)-induced ferroptosis. This chain is Zinc transporter SLC39A7, found in Canis lupus familiaris (Dog).